Consider the following 208-residue polypeptide: Guanylate kinase (208 aa).

Residues 5-184 (GLLIVFSGPS…AAERVKCVIE (180 aa)) form the Guanylate kinase-like domain. 12 to 19 (GPSGVGKG) contacts ATP.

It belongs to the guanylate kinase family.

The protein localises to the cytoplasm. The catalysed reaction is GMP + ATP = GDP + ADP. Essential for recycling GMP and indirectly, cGMP. This Streptococcus pneumoniae serotype 4 (strain ATCC BAA-334 / TIGR4) protein is Guanylate kinase.